Reading from the N-terminus, the 451-residue chain is MTRVAIIGAGPSGLAQLRAFQSAGKKGAAIPELVCFEKQSDWGGLWNYTWRTGVDEYGEPVHGSMYRYLWSNGPKECLEFADYSFEEHFGRPIPSYPPRAVLHDYIMGRVEKSDVRKFVRFSTVVRWIDFDETTQLFTVTVKDLKKDELYSETFDYVVVASGHFSTPNVPHFPGIEVFPGRVLHAHDFRDANEFVGKNLLVVGSSYSAEDIASQCYKYGAKSITFSYRSKPLNFDWPECFTVKPLLTKLTGKTAHFKDGSEAVVDAVLLCTGYLHHFPFLADNLRLKTNNRLYPAGLYKGIFWQDNPKLIYLGMQDQYFTFNMFDAQAWYARDVILGRIKLPAAEERQADIDHWRGLEEKLETAFDGIDFQTEYMRDLIPATDYPMFDLDKVAALFKEWEEDKVKSIMGYRDNSYVSIMTGNKAPPHHTKWMEALDDSFDAFQNRPEAAAE.

Positions 12, 37, 39, 45, 46, and 62 each coordinate FAD. The NADP(+) site is built by W70 and N72. The FAD site is built by N72 and V125. S204, S205, S207, and R228 together coordinate NADP(+). Residues Q317 and T320 each contribute to the FAD site. R411 is an NADP(+) binding site.

The protein belongs to the FMO family. It depends on FAD as a cofactor.

The catalysed reaction is trimethylamine + NADPH + O2 = trimethylamine N-oxide + NADP(+) + H2O. Functionally, catalyzes the oxidation of trimethylamine (TMA) to produce trimethylamine N-oxide (TMAO). In vitro, has a broad substrate specificity, oxidizing many nitrogen- and sulfur-containing compounds, including dimethylamine (DMA), dimethylsulfide (DMS), dimethylsulfoxide (DMSO), cysteamine, methimazole and dimethylaniline. The polypeptide is Trimethylamine monooxygenase (Methylocella silvestris (strain DSM 15510 / CIP 108128 / LMG 27833 / NCIMB 13906 / BL2)).